An 842-amino-acid chain; its full sequence is Squamosa promoter-binding-like protein 9 (842 aa).

Residues 1 to 18 (MDAPGGGGGGGGGGGGVD) are compositionally biased toward gly residues. Disordered stretches follow at residues 1–22 (MDAPGGGGGGGGGGGGVDAGEP), 59–97 (ALLPPAPSPQPAEAEAEAAGPASLPSSMQAEGSKRRVRK), and 140–168 (RKKPKGAGRGSGAAVGGSGGGASRGTPAE). The span at 69-85 (PAEAEAEAAGPASLPSS) shows a compositional bias: low complexity. Residues 146 to 162 (AGRGSGAAVGGSGGGAS) are compositionally biased toward gly residues. The SBP-type; atypical zinc-finger motif lies at 168-245 (EMKCQVPGCE…ERHNKRRRRK (78 aa)). Residues C171, C176, C193, C196, C212, C215, H219, and C231 each coordinate Zn(2+). The Bipartite nuclear localization signal signature appears at 228-244 (KRSCRRKLERHNKRRRR). Residues 236 to 246 (ERHNKRRRRKP) show a composition bias toward basic residues. The disordered stretch occupies residues 236 to 256 (ERHNKRRRRKPDSKGILEKDI).

Ubiquitous.

It is found in the nucleus. In terms of biological role, trans-acting factor that binds specifically to the consensus nucleotide sequence 5'-TNCGTACAA-3'. The sequence is that of Squamosa promoter-binding-like protein 9 (SPL9) from Oryza sativa subsp. japonica (Rice).